Consider the following 416-residue polypeptide: uncharacterized protein (416 aa).

Transmembrane regions (helical) follow at residues 5-25 (LFLISLVSFVFFIFGNWILSL), 84-104 (ISGLSAFGTTLLIYFITLKHV), 128-148 (AYVPEFTLVFFSTLGVYLFSI), 160-180 (LAFLTKGPVGVILPIGIYLLW), 192-212 (VLLFILIGFSWYFLMIYKFGF), 237-257 (PIYFYPLVILVSSILFLPVFL), 263-283 (FDKRLLPFAGWFLLVLVFYSL), 288-308 (LHHYILFSYPALSVIIGFYLT), and 312-332 (IKYAYIVGSFLLLILMFGVYI).

It belongs to the glycosyltransferase 83 family.

It localises to the cell membrane. This is an uncharacterized protein from Aquifex aeolicus (strain VF5).